The primary structure comprises 118 residues: Small ribosomal subunit protein uS13 (118 aa).

The interval 91–118 (HRRSLPVRGQRTKTNARTRKGPRKPIKA) is disordered.

Belongs to the universal ribosomal protein uS13 family. As to quaternary structure, part of the 30S ribosomal subunit. Forms a loose heterodimer with protein S19. Forms two bridges to the 50S subunit in the 70S ribosome.

Functionally, located at the top of the head of the 30S subunit, it contacts several helices of the 16S rRNA. In the 70S ribosome it contacts the 23S rRNA (bridge B1a) and protein L5 of the 50S subunit (bridge B1b), connecting the 2 subunits; these bridges are implicated in subunit movement. Contacts the tRNAs in the A and P-sites. This chain is Small ribosomal subunit protein uS13, found in Francisella tularensis subsp. tularensis (strain FSC 198).